A 264-amino-acid polypeptide reads, in one-letter code: Thymidylate synthase (264 aa).

Arginine 21 contributes to the dUMP binding site. Histidine 51 serves as a coordination point for (6R)-5,10-methylene-5,6,7,8-tetrahydrofolate. 126 to 127 serves as a coordination point for dUMP; the sequence is RR. The Nucleophile role is filled by cysteine 146. DUMP contacts are provided by residues 166–169, asparagine 177, and 207–209; these read RSVD and HLY. Position 169 (aspartate 169) interacts with (6R)-5,10-methylene-5,6,7,8-tetrahydrofolate. A (6R)-5,10-methylene-5,6,7,8-tetrahydrofolate-binding site is contributed by alanine 263.

The protein belongs to the thymidylate synthase family. Bacterial-type ThyA subfamily. Homodimer.

It localises to the cytoplasm. It catalyses the reaction dUMP + (6R)-5,10-methylene-5,6,7,8-tetrahydrofolate = 7,8-dihydrofolate + dTMP. It participates in pyrimidine metabolism; dTTP biosynthesis. In terms of biological role, catalyzes the reductive methylation of 2'-deoxyuridine-5'-monophosphate (dUMP) to 2'-deoxythymidine-5'-monophosphate (dTMP) while utilizing 5,10-methylenetetrahydrofolate (mTHF) as the methyl donor and reductant in the reaction, yielding dihydrofolate (DHF) as a by-product. This enzymatic reaction provides an intracellular de novo source of dTMP, an essential precursor for DNA biosynthesis. In Geobacillus thermodenitrificans (strain NG80-2), this protein is Thymidylate synthase.